A 558-amino-acid polypeptide reads, in one-letter code: Dihydroxy-acid dehydratase (558 aa).

Asp81 provides a ligand contact to Mg(2+). Residue Cys122 participates in [2Fe-2S] cluster binding. Residues Asp123 and Lys124 each coordinate Mg(2+). An N6-carboxylysine modification is found at Lys124. Cys195 is a binding site for [2Fe-2S] cluster. Glu447 provides a ligand contact to Mg(2+). Residue Ser473 is the Proton acceptor of the active site.

The protein belongs to the IlvD/Edd family. Homodimer. [2Fe-2S] cluster is required as a cofactor. Requires Mg(2+) as cofactor.

It catalyses the reaction (2R)-2,3-dihydroxy-3-methylbutanoate = 3-methyl-2-oxobutanoate + H2O. The enzyme catalyses (2R,3R)-2,3-dihydroxy-3-methylpentanoate = (S)-3-methyl-2-oxopentanoate + H2O. It participates in amino-acid biosynthesis; L-isoleucine biosynthesis; L-isoleucine from 2-oxobutanoate: step 3/4. Its pathway is amino-acid biosynthesis; L-valine biosynthesis; L-valine from pyruvate: step 3/4. In terms of biological role, functions in the biosynthesis of branched-chain amino acids. Catalyzes the dehydration of (2R,3R)-2,3-dihydroxy-3-methylpentanoate (2,3-dihydroxy-3-methylvalerate) into 2-oxo-3-methylpentanoate (2-oxo-3-methylvalerate) and of (2R)-2,3-dihydroxy-3-methylbutanoate (2,3-dihydroxyisovalerate) into 2-oxo-3-methylbutanoate (2-oxoisovalerate), the penultimate precursor to L-isoleucine and L-valine, respectively. The protein is Dihydroxy-acid dehydratase of Bacillus pumilus (strain SAFR-032).